Consider the following 777-residue polypeptide: Intraflagellar transport protein 80 homolog (777 aa).

WD repeat units follow at residues 12 to 50 (KHQELVSCVGWTTAEELYSCSDDHQIVKWNLLTSETSLI), 104 to 143 (AHCGAVLAGRWNYEGTALVTVGEDGQVKIWSKTGMLRSTL), 145 to 185 (QQGT…LQWK), 186 to 225 (AHDGIILKVDWNSVNDLILSAGEDCKYKVWDSYGRVLYGS), 227 to 265 (PHEHPITSVAWAPDGELFAVGSFHTLRLCDKTGWSYALE), 267 to 306 (PNTGSIFNIAWSIDGTQIAGACGNGHVVFAHVVEQRWEWK), and 504 to 542 (KLGTMVHTLAWCDTCNILCGIQDTRFTVWYYPNTIYVDR).

As to quaternary structure, component of the IFT complex B, at least composed of IFT20, IFT22, IFT25, IFT27, IFT46, IFT52, TRAF3IP1/IFT54, IFT57, IFT74, IFT80, IFT81, and IFT88. Interacts with IFT88. Interacts with IFT57 and IFT70B.

It localises to the cytoplasm. Its subcellular location is the cytoskeleton. It is found in the cilium basal body. The protein resides in the cilium axoneme. In terms of biological role, component of the intraflagellar transport (IFT) complex B, which is essential for the development and maintenance of motile and sensory cilia. This is Intraflagellar transport protein 80 homolog (Ift80) from Mus musculus (Mouse).